A 630-amino-acid chain; its full sequence is MTDYRLWSNTNTTNTCDDTMMMDSFLSSDPSSFWPASTPNRPTPVNGVGETMPFFNQESLQQRLQALIDGARESWAYAIFWQSSVVDFASQTVLGWGDGYYKGEEDKNKRRGSSSSAANFVAEQEHRKKVLRELNSLISGVQASAGNGTDDAVDEEVTDTEWFFLISMTQSFVNGNGLPGLAMYSSSPIWVTGTEKLAASQCERARQAQGFGLQTIVCIPSANGVVELGSTELIFQSSDLMNKVKYLFNFNIDMGSVTGSGSGSGSCAVHPEPDPSALWLTDPSSSVVEPKDSLIHSSSRDVQLVYGNENSENQQQHCQGFFTKELNFSGYGFDGSSNRNKTGISCKPESREILNFGDSSKRFSGQSQLGPGPGLMEENKNKNKNKKRSLGSRGNNEEGMLSFVSGVILPTSTMGKSGDSDHSDLEASVVKEAVVEPEKKPRKRGRKPANGREEPLNHVEAERQRREKLNQRFYALRAVVPNVSKMDKASLLGDAIAYINELKSKVQNSDLDKEELRSQIECLRKELTNKGSSNYSASPPLNQDVKIVDMDIDVKVIGWDAMIRIQCSKKNHPAARLMAALKDLDLDVHHASVSVVNDLMIQQATVKMGSRLYAQEQLRIALTSKIAESR.

Disordered stretches follow at residues 356–398 and 430–463; these read FGDS…NNEE and VKEAVVEPEKKPRKRGRKPANGREEPLNHVEAER. Residues 440–449 show a composition bias toward basic residues; sequence KPRKRGRKPA. Positions 450–463 are enriched in basic and acidic residues; that stretch reads NGREEPLNHVEAER. The basic motif; degenerate stretch occupies residues 453 to 466; sequence EEPLNHVEAERQRR. The region spanning 453–502 is the bHLH domain; that stretch reads EEPLNHVEAERQRREKLNQRFYALRAVVPNVSKMDKASLLGDAIAYINEL. Positions 467–502 are helix-loop-helix motif; sequence EKLNQRFYALRAVVPNVSKMDKASLLGDAIAYINEL.

Highly expressed in trichomes and at lower levels in leaves and flowers. Expressed at low levels in roots, stems, leaves, flowers and fruits.

The protein localises to the nucleus. Transcriptional activator that binds to the G-box motif (5'-AACGTG-3') found in a number of promoters of jasmonate-induced genes. Transcription activator involved in the transcriptional regulation of terpene biosynthesis in glandular trichomes. Binds to the promoter of the linalool synthase TPS5 and promotes TPS5 gene transactivation. Acts synergistically with EOT1 in the transactivation of TPS5. Involved in type VI glandular trichome development. Involved in the activation of terpene synthases required for volatile mono- and sesquiterpenes synthesis by the glandular cells of type VI trichomes. This is Transcription factor MYC1 from Solanum lycopersicum (Tomato).